The chain runs to 962 residues: Translation initiation factor IF-2 (962 aa).

Disordered stretches follow at residues 122–263, 293–327, and 341–362; these read EVGV…EPAR, TEEV…TRRK, and IAAQ…AKEP. Residues 156–173 are compositionally biased toward low complexity; the sequence is AVEPQTVVPPVAAPAAEV. Basic and acidic residues predominate over residues 188–202; it reads KPPEEKETKVKHAEP. The segment covering 244–256 has biased composition (basic residues); that stretch reads RPKKAKKRRRKKV. Composition is skewed to basic and acidic residues over residues 308 to 327 and 344 to 362; these read RPEE…TRRK and QDDR…AKEP. One can recognise a tr-type G domain in the interval 455 to 624; sequence RRPPVITVMG…LLQAELLELK (170 aa). The interval 464-471 is G1; sequence GHVDHGKT. 464–471 contributes to the GTP binding site; that stretch reads GHVDHGKT. The G2 stretch occupies residues 489–493; it reads GITQH. The G3 stretch occupies residues 510-513; that stretch reads DTPG. GTP is bound by residues 510–514 and 564–567; these read DTPGH and NKVD. The interval 564–567 is G4; it reads NKVD. The interval 600 to 602 is G5; that stretch reads SAK.

This sequence belongs to the TRAFAC class translation factor GTPase superfamily. Classic translation factor GTPase family. IF-2 subfamily.

It is found in the cytoplasm. Its function is as follows. One of the essential components for the initiation of protein synthesis. Protects formylmethionyl-tRNA from spontaneous hydrolysis and promotes its binding to the 30S ribosomal subunits. Also involved in the hydrolysis of GTP during the formation of the 70S ribosomal complex. This Syntrophobacter fumaroxidans (strain DSM 10017 / MPOB) protein is Translation initiation factor IF-2.